The chain runs to 422 residues: Histidine--tRNA ligase (422 aa).

This sequence belongs to the class-II aminoacyl-tRNA synthetase family. As to quaternary structure, homodimer.

The protein resides in the cytoplasm. The enzyme catalyses tRNA(His) + L-histidine + ATP = L-histidyl-tRNA(His) + AMP + diphosphate + H(+). This is Histidine--tRNA ligase from Prosthecochloris aestuarii (strain DSM 271 / SK 413).